Consider the following 211-residue polypeptide: MTRVALTSAVNLAKKLQEAGIRHPAVLKAISHTPRELFLDNALAHKAYENTALPIGQGQTISQPYIVARMTELLLQHQPQKVLEVGTGSGYQAAILAQLVPELCTIERIKGLQIQARQRLKRLDLHNVSFKYGDGWQGWPNRSPFDGIMVTAAAAKVPEALLSQLAEGGVLIIPVGEETQQLMRFTRRSDRFSSEVIETVKFVPLVNGELA.

Residue Ser-62 is part of the active site.

Belongs to the methyltransferase superfamily. L-isoaspartyl/D-aspartyl protein methyltransferase family.

It localises to the cytoplasm. The catalysed reaction is [protein]-L-isoaspartate + S-adenosyl-L-methionine = [protein]-L-isoaspartate alpha-methyl ester + S-adenosyl-L-homocysteine. Functionally, catalyzes the methyl esterification of L-isoaspartyl residues in peptides and proteins that result from spontaneous decomposition of normal L-aspartyl and L-asparaginyl residues. It plays a role in the repair and/or degradation of damaged proteins. The protein is Protein-L-isoaspartate O-methyltransferase of Shewanella sp. (strain MR-4).